The following is a 757-amino-acid chain: Double zinc ribbon and ankyrin repeat-containing protein 1 (757 aa).

DZANK-type zinc fingers lie at residues 230 to 290 and 359 to 407; these read CAHC…VVCE and CSRC…GSCG. ANK repeat units follow at residues 631 to 662 and 666 to 695; these read ENRLLLEEVGSTGKGRLSVLEQLLDEGADPNC and QGRPAVIVAVVNKHFEAIPVLAQRGADIDQ.

Interacts with NINL. Associates with DYNC1H1 and multiple dynein intermediate and light chains as well as actin-binding proteins. Expressed in retina.

The protein localises to the cell projection. It is found in the cilium. Functionally, involved in vesicle transport in photoreceptor cells. This is Double zinc ribbon and ankyrin repeat-containing protein 1 from Rattus norvegicus (Rat).